The primary structure comprises 23 residues: Alyteserin-1c (23 aa).

Ser-23 is subject to Serine amide.

Expressed by the skin glands.

Its subcellular location is the secreted. It localises to the target cell membrane. In terms of biological role, antibacterial peptide with amphipathic alpha-helical structure that shows selective growth-inhibitory activity against Gram-negative bacteria but low hemolytic activity against human erythrocytes (LC(50)=145-220 uM). It is moderately active against the Gram-negative bacteria E.coli (MIC=25 uM), K.pneumoniae (MIC=50 uM), P.aeruginosa (MIC=25 uM), A.baumannii (MIC=6 uM), and is weaky active against the Gram-positive S.aureus (MIC=100-250 uM). This is Alyteserin-1c from Alytes obstetricans (Common midwife toad).